The primary structure comprises 56 residues: Alpha-pompilidotoxin (56 aa).

The N-terminal stretch at 1–22 is a signal peptide; that stretch reads MFKQLILLALAAVFLLINISSA. The propeptide occupies 23–42; the sequence is EPAAEPNANAEPLAEASAEP. Position 55 is a leucine amide (L55).

In terms of tissue distribution, expressed by the venom gland.

The protein resides in the secreted. In terms of biological role, inhibits sodium channels (Nav) inactivation. Shows two types of inhibitory activities on channels. Inhibition of hNav1.6/SCN8A shows a large increase in the steady-state current component without any increase in the slow component, whereas inhibition of hNav1.1/SCN1A, hNav1.2/SCN2A, hNav1.3/SCN3A and hNav1.7/SCN9A shows a large increase in the slow component with only a small steady-state component. Is 5-fold less potent than beta-PMTX for inducing repetitive action potentials in lobster neuromuscular junctions. This Anoplius samariensis (Solitary wasp) protein is Alpha-pompilidotoxin.